The primary structure comprises 578 residues: Moesin/ezrin/radixin homolog 1 (578 aa).

The region spanning 1–296 (MSPKALNVRV…GNHELYMRRR (296 aa)) is the FERM domain. Residues 463 to 555 (ASTTPQHHHV…HRENVRQGRD (93 aa)) form a disordered region. Residues 475-484 (DENENEEELT) are compositionally biased toward acidic residues. The span at 492–555 (VSRDLDTDEH…HRENVRQGRD (64 aa)) shows a compositional bias: basic and acidic residues. Phosphothreonine is present on T559.

In terms of assembly, interacts with wgn. Interacts with Mer and arm at the adherens junction. Interacts with cytoskeletal actin at apical buds of microvilli in the precellularised embryo. Interacts with PCID2 (possibly via FERM domain). In terms of processing, phosphorylated on Thr-559. In the oocyte this phosphorylation is induced by phosphatidylinositol 4,5-bisphosphate (PtdIns[4,5]P(2)) generated by sktl.

Its subcellular location is the cell junction. It localises to the adherens junction. The protein localises to the cell projection. It is found in the microvillus. The protein resides in the rhabdomere. Its subcellular location is the cell membrane. It localises to the cytoplasm. The protein localises to the cytoskeleton. It is found in the cell cortex. The protein resides in the cilium. Its subcellular location is the flagellum. It localises to the nucleus. The protein localises to the nucleoplasm. It is found in the chromosome. Involved in connections of major cytoskeletal structures to the plasma membrane. Together with wgn, involved in control of axon targeting of R8 and R2-R5 photoreceptors, independent of egr. In the nucleus, recruited to sites of active transcription by RNA polymerase II where it has a role in nuclear mRNA export together with the mRNA export factor PCID2 and other messenger ribonucleoprotein (mRNP) particles. This Drosophila melanogaster (Fruit fly) protein is Moesin/ezrin/radixin homolog 1 (Moe).